The chain runs to 1016 residues: MDLSTKKVISAGLVFIYALSLAMLVPMFLASNQGVISAVINPATGGNCLPGRYSGIVQASGVTLPAVNLSYVAPFTSALPLLVYSQSIFNGTLYYYNSTGSYELMKKYGISITPVHQIVNVTSRFFARTTEGVIPNTLPPYTSGNCYLFNTTPPTPFYYSYRTLAMVNSYFPNTQYINTSSEISDLYFNVSYLPYNTTLTLSIYATPALQGIEGIIRFNFSVKLCANSTIYPYAEYTLHAYFYFNNSFICELENIKTSIPGVASATSPTTIHFTSTAVNYILLVDLGLWSNVSTVYVTGVEGATYPSDTVATTINNGSFHPVIIPPAICIQYKTFYSNQINPELPNTSGPDSIPYMIANVTIYSPDDMLNWTYAQKYVGCIAAEYANPKWNPYCKINEAWYNNYGHGGNGLTVTLMVGNNKVLSINYPYLALCHVSYTDGFHNFVYKFSIEFLLSSVDNITYMLTTVAPNSTGLGGDMLYVLIKPCQLKDATILLTYNDSDYAVQHYFGPVDREIAVVCNNIKVYTPLLYMPKCVPISTPFFYGQVIDYDYGYNYALVGYVNTYYFNATSHQYYKVGQYVDVQHVSGDSELVLGVCPGYKCASLSIYYPNTPPYYPASHEAKVGKIMGICIEFANGTMERIYLSPSNITALLTTNVMKQMAPMPPFWNYSFEISITGLESILHITPNQALTVLNNSYIIVCYYDIASNSTVHNMTKLVSTPVTVAISPPSQAFYYAPATPFDDIVHPGCQIFYFVNVNATYPITVTLTDKSLGELSPTTIVTTTVTCIYVILYNGTMLHYNSAVFPITLTETAPSSGVFTATLYVEVTNSKGTPVTAYPLNYSYIAIYNPATKMQIIVGKLSNIMPLVPSKYFKVGVVVDGLSANSTFTLTEIPNVIYNVSPIIYNYIDGELSVTVAANIPGYYYSGYLVLTIYNCTAKPCHPIYTYEIYFNFSATSPHFVAAYDLLFLEPILNGHTYYITITAIVVPLTYEPFTTIGFEGKVFSGAYFFSAPAGS.

An N-terminal signal peptide occupies residues 1-30 (MDLSTKKVISAGLVFIYALSLAMLVPMFLA).

It belongs to the Sulfolobales SlaA family. As to quaternary structure, the mushroom-shaped unit cells of the Sulfolobales' S-layers may consist of three SlaB subunits and six SlaA subunits.

It is found in the secreted. Its subcellular location is the cell wall. The protein localises to the S-layer. Its function is as follows. S-layer large protein. May form the highly ordered outer sheath. The polypeptide is S-layer protein A (Acidianus ambivalens (Desulfurolobus ambivalens)).